A 575-amino-acid chain; its full sequence is DNA mismatch repair protein MutL (575 aa).

Belongs to the DNA mismatch repair MutL/HexB family.

In terms of biological role, this protein is involved in the repair of mismatches in DNA. It is required for dam-dependent methyl-directed DNA mismatch repair. May act as a 'molecular matchmaker', a protein that promotes the formation of a stable complex between two or more DNA-binding proteins in an ATP-dependent manner without itself being part of a final effector complex. The chain is DNA mismatch repair protein MutL from Coxiella burnetii (strain CbuG_Q212) (Coxiella burnetii (strain Q212)).